A 319-amino-acid polypeptide reads, in one-letter code: Glutathione synthetase (319 aa).

The 187-residue stretch at 125-311 folds into the ATP-grasp domain; sequence EKLFATLFPQ…IGGLLMDAIE (187 aa). 151-208 is a binding site for ATP; it reads FAEQQGDVILKPLDGMGGASIFRHRAGDPNLSVILETLTAHGTQQIMAQGYLPAIKDG. The Mg(2+) site is built by glutamate 282 and asparagine 284.

Belongs to the prokaryotic GSH synthase family. It depends on Mg(2+) as a cofactor. Mn(2+) serves as cofactor.

The enzyme catalyses gamma-L-glutamyl-L-cysteine + glycine + ATP = glutathione + ADP + phosphate + H(+). It participates in sulfur metabolism; glutathione biosynthesis; glutathione from L-cysteine and L-glutamate: step 2/2. This is Glutathione synthetase from Pseudomonas syringae pv. tomato (strain ATCC BAA-871 / DC3000).